Consider the following 795-residue polypeptide: Phenylalanine--tRNA ligase beta subunit (795 aa).

A tRNA-binding domain is found at 39-148; sequence AGVFDGVKVG…ENAPIGMDFR (110 aa). The B5 domain maps to 401–476; the sequence is PKPNQVALRR…RIYGYNNIPN (76 aa). 4 residues coordinate Mg(2+): Asp454, Asp460, Glu463, and Glu464. The region spanning 701 to 794 is the FDX-ACB domain; it reads SKFPANRRDI…VSAQFGAALR (94 aa).

It belongs to the phenylalanyl-tRNA synthetase beta subunit family. Type 1 subfamily. Tetramer of two alpha and two beta subunits. Mg(2+) is required as a cofactor.

It is found in the cytoplasm. It carries out the reaction tRNA(Phe) + L-phenylalanine + ATP = L-phenylalanyl-tRNA(Phe) + AMP + diphosphate + H(+). The sequence is that of Phenylalanine--tRNA ligase beta subunit (pheT) from Vibrio cholerae serotype O1 (strain ATCC 39315 / El Tor Inaba N16961).